The primary structure comprises 313 residues: Foldase protein PrsA (313 aa).

A signal peptide spans Met-1–Ala-20. A lipid anchor (N-palmitoyl cysteine) is attached at Cys-21. Residue Cys-21 is the site of S-diacylglycerol cysteine attachment. Positions Thr-143–Lys-241 constitute a PpiC domain.

Belongs to the PrsA family.

The protein localises to the cell membrane. It carries out the reaction [protein]-peptidylproline (omega=180) = [protein]-peptidylproline (omega=0). Its function is as follows. Plays a major role in protein secretion by helping the post-translocational extracellular folding of several secreted proteins. The protein is Foldase protein PrsA of Streptococcus pneumoniae (strain P1031).